We begin with the raw amino-acid sequence, 569 residues long: Mitochondrial import receptor subunit tomm-70 (569 aa).

Residues methionine 1–lysine 12 are Mitochondrial intermembrane-facing. Residues lysine 13–tyrosine 32 traverse the membrane as a helical segment. Residues lysine 33–tyrosine 569 are Cytoplasmic-facing. TPR repeat units follow at residues leucine 44–asparagine 77, threonine 119–leucine 152, aspartate 221–methionine 254, and leucine 510–arginine 544.

The protein belongs to the Tom70 family. In terms of assembly, forms part of the preprotein translocase complex of the outer mitochondrial membrane (TOM complex). In terms of tissue distribution, expressed in body wall muscle cells, the pharynx and structures in the tail.

It localises to the mitochondrion outer membrane. Its function is as follows. Receptor that accelerates the import of all mitochondrial precursor proteins. This chain is Mitochondrial import receptor subunit tomm-70, found in Caenorhabditis elegans.